Reading from the N-terminus, the 384-residue chain is MVDKKSPLIAVSVGEASGDLLGAHLIRAIRKRCPQARFVGIGGELMKAEGFESLYDQERLAVRGFAEVVRRLPEILRIRRGLVRDLLSLKPDVFVGIDAPDFNLGVAERLKRSGIPTVHYVSPSVWAWRRERVGKIVHQVNRVLCLFPMEPQLYLDAGGRAEFVGHPMAQLMPLEDDRETARKTLGVDAGIPVFALLPGSRVSEIDYMAPVFFQTALLLLERYPAARFLLPAATEATKRRLAEVLQRPEFAGLPLTVIDRQSETVCRAADAVLVTSGTATLEVALCKRPMVISYKISPLTYAYVKRKIKVPHVGLPNILLGKEAVPELLQSEAKPEKLAAALADWYEHPDKVAALQQDFRALHLLLKKDTADLAARAVLEEAGC.

Belongs to the LpxB family.

It catalyses the reaction a lipid X + a UDP-2-N,3-O-bis[(3R)-3-hydroxyacyl]-alpha-D-glucosamine = a lipid A disaccharide + UDP + H(+). The protein operates within bacterial outer membrane biogenesis; LPS lipid A biosynthesis. In terms of biological role, condensation of UDP-2,3-diacylglucosamine and 2,3-diacylglucosamine-1-phosphate to form lipid A disaccharide, a precursor of lipid A, a phosphorylated glycolipid that anchors the lipopolysaccharide to the outer membrane of the cell. This Neisseria meningitidis serogroup C / serotype 2a (strain ATCC 700532 / DSM 15464 / FAM18) protein is Lipid-A-disaccharide synthase.